Reading from the N-terminus, the 525-residue chain is Transcriptional regulatory protein TOD6 (525 aa).

Residues 22 to 82 are disordered; the sequence is GFSILSKHPH…NNPSSWDPSD (61 aa). A compositionally biased stretch (polar residues) spans 35-47; sequence LVHSHSLSHTNAK. The span at 61 to 71 shows a compositional bias: basic and acidic residues; the sequence is STNKEEAESLK. Residues 67–124 enclose the HTH myb-type domain; it reads AESLKKNNPSSWDPSDDIKLRHLKEIKNLGWKEIAHHFPNRTPNACQFRWRRLKSGNL. Positions 97-120 form a DNA-binding region, H-T-H motif; sequence WKEIAHHFPNRTPNACQFRWRRLK. Ser280 is modified (phosphoserine). The segment at 283-308 is disordered; the sequence is PSTQIPHSTTKTRKNSHSVISSRRSS. Residues 299–308 are compositionally biased toward low complexity; sequence HSVISSRRSS. Phosphoserine occurs at positions 333, 341, and 366. The tract at residues 451–510 is disordered; sequence TNEGCKDEEEEDDIDPLHKENGINTPSQQSQNYGMLEAKHDNPKSSELSSMTSANDIRNE. Composition is skewed to polar residues over residues 472-483 and 495-506; these read GINTPSQQSQNY and SSELSSMTSAND.

Belongs to the DOT6 family. In terms of assembly, component of the RPD3C(L) complex composed of at least ASH1, CTI6, DEP1, DOT6, PHO23, RPD3, RXT2, RXT3, SAP30, SDS3, SIN3, TOD6; UME1 and UME6.

The protein localises to the cytoplasm. Its subcellular location is the nucleus. Component of the RPD3 histone deacetylase complex RPD3C(L) responsible for the deacetylation of lysine residues on the N-terminal part of the core histones (H2A, H2B, H3 and H4). Histone deacetylation gives a tag for epigenetic repression and plays an important role in transcriptional regulation, cell cycle progression and developmental events. TOD6 binds to sequences containing the core CGATG, which resembles the PAC (Polymerase A and C) motif. This is Transcriptional regulatory protein TOD6 (TOD6) from Saccharomyces cerevisiae (strain ATCC 204508 / S288c) (Baker's yeast).